A 174-amino-acid chain; its full sequence is Crossover junction endodeoxyribonuclease RuvC (174 aa).

Catalysis depends on residues Asp8, Glu67, and Asp139. Asp8, Glu67, and Asp139 together coordinate Mg(2+).

Belongs to the RuvC family. As to quaternary structure, homodimer which binds Holliday junction (HJ) DNA. The HJ becomes 2-fold symmetrical on binding to RuvC with unstacked arms; it has a different conformation from HJ DNA in complex with RuvA. In the full resolvosome a probable DNA-RuvA(4)-RuvB(12)-RuvC(2) complex forms which resolves the HJ. Requires Mg(2+) as cofactor.

It localises to the cytoplasm. It catalyses the reaction Endonucleolytic cleavage at a junction such as a reciprocal single-stranded crossover between two homologous DNA duplexes (Holliday junction).. In terms of biological role, the RuvA-RuvB-RuvC complex processes Holliday junction (HJ) DNA during genetic recombination and DNA repair. Endonuclease that resolves HJ intermediates. Cleaves cruciform DNA by making single-stranded nicks across the HJ at symmetrical positions within the homologous arms, yielding a 5'-phosphate and a 3'-hydroxyl group; requires a central core of homology in the junction. The consensus cleavage sequence is 5'-(A/T)TT(C/G)-3'. Cleavage occurs on the 3'-side of the TT dinucleotide at the point of strand exchange. HJ branch migration catalyzed by RuvA-RuvB allows RuvC to scan DNA until it finds its consensus sequence, where it cleaves and resolves the cruciform DNA. The chain is Crossover junction endodeoxyribonuclease RuvC from Pseudomonas fluorescens (strain ATCC BAA-477 / NRRL B-23932 / Pf-5).